We begin with the raw amino-acid sequence, 310 residues long: Ornithine carbamoyltransferase (310 aa).

Residues 56 to 59 (STRT), Gln-83, Arg-107, and 134 to 137 (HPCQ) each bind carbamoyl phosphate. L-ornithine-binding positions include Asn-165, Asp-229, and 233-234 (SM). Carbamoyl phosphate contacts are provided by residues 269-270 (CL) and Arg-297.

It belongs to the aspartate/ornithine carbamoyltransferase superfamily. OTCase family.

It localises to the cytoplasm. It carries out the reaction carbamoyl phosphate + L-ornithine = L-citrulline + phosphate + H(+). It functions in the pathway amino-acid biosynthesis; L-arginine biosynthesis; L-arginine from L-ornithine and carbamoyl phosphate: step 1/3. In terms of biological role, reversibly catalyzes the transfer of the carbamoyl group from carbamoyl phosphate (CP) to the N(epsilon) atom of ornithine (ORN) to produce L-citrulline. The protein is Ornithine carbamoyltransferase of Symbiobacterium thermophilum (strain DSM 24528 / JCM 14929 / IAM 14863 / T).